A 1193-amino-acid polypeptide reads, in one-letter code: DNA-directed RNA polymerase subunit beta (1193 aa).

Acidic residues predominate over residues 1149-1162 (EEEIEMRDLEDEED). The disordered stretch occupies residues 1149-1193 (EEEIEMRDLEDEEDAKQADGLALSGDEEPEETASADVERDVVTKE). Residues 1184-1193 (DVERDVVTKE) are compositionally biased toward basic and acidic residues.

This sequence belongs to the RNA polymerase beta chain family. In terms of assembly, RNAP is composed of a core of 2 alpha, a beta and a beta' subunit. The core is associated with a delta subunit, and at least one of epsilon or omega. When a sigma factor is associated with the core the holoenzyme is formed, which can initiate transcription.

It carries out the reaction RNA(n) + a ribonucleoside 5'-triphosphate = RNA(n+1) + diphosphate. In terms of biological role, DNA-dependent RNA polymerase catalyzes the transcription of DNA into RNA using the four ribonucleoside triphosphates as substrates. The chain is DNA-directed RNA polymerase subunit beta from Bacillus subtilis (strain 168).